Here is a 493-residue protein sequence, read N- to C-terminus: Glycogen synthase 1 (493 aa).

Residue Lys-15 coordinates ADP-alpha-D-glucose.

This sequence belongs to the glycosyltransferase 1 family. Bacterial/plant glycogen synthase subfamily.

It carries out the reaction [(1-&gt;4)-alpha-D-glucosyl](n) + ADP-alpha-D-glucose = [(1-&gt;4)-alpha-D-glucosyl](n+1) + ADP + H(+). Its pathway is glycan biosynthesis; glycogen biosynthesis. In terms of biological role, synthesizes alpha-1,4-glucan chains using ADP-glucose. The chain is Glycogen synthase 1 from Methylococcus capsulatus (strain ATCC 33009 / NCIMB 11132 / Bath).